The primary structure comprises 282 residues: uncharacterized protein (282 aa).

4 helical membrane-spanning segments follow: residues 130 to 150 (WALL…GFGL), 170 to 190 (STSW…WPSA), 191 to 211 (AAGL…YVIV), and 223 to 243 (ILTH…WRSA). The tract at residues 263 to 282 (DNASRGRRRGHLWPTDGSAA) is disordered.

The protein resides in the cell membrane. This is an uncharacterized protein from Mycobacterium tuberculosis (strain CDC 1551 / Oshkosh).